A 312-amino-acid polypeptide reads, in one-letter code: Fe-S cluster assembly protein DRE2 (312 aa).

Positions 7–139 (LSDVPRVLLL…VKPVFEEQSV (133 aa)) are N-terminal SAM-like domain. Positions 140–204 (LLPFSINRSQ…EDELINEDEL (65 aa)) are linker. Cys214, Cys225, Cys228, and Cys230 together coordinate [2Fe-2S] cluster. The tract at residues 214–230 (CRPKAGKRRRACKDCTC) is fe-S binding site A. Residues Cys275, Cys278, Cys286, and Cys289 each coordinate [4Fe-4S] cluster. Short sequence motifs (cx2C motif) lie at residues 275 to 278 (CGNC) and 286 to 289 (CDGC). The tract at residues 275 to 289 (CGNCSLGDAFRCDGC) is fe-S binding site B.

The protein belongs to the anamorsin family. Monomer. Interacts with TAH18. Interacts with MIA40. [2Fe-2S] cluster is required as a cofactor. The cofactor is [4Fe-4S] cluster.

The protein resides in the cytoplasm. Its subcellular location is the mitochondrion intermembrane space. In terms of biological role, component of the cytosolic iron-sulfur (Fe-S) protein assembly (CIA) machinery required for the maturation of extramitochondrial Fe-S proteins. Part of an electron transfer chain functioning in an early step of cytosolic Fe-S biogenesis, facilitating the de novo assembly of a [4Fe-4S] cluster on the scaffold complex CFD1-NBP35. Electrons are transferred to DRE2 from NADPH via the FAD- and FMN-containing protein TAH18. TAH18-DRE2 are also required for the assembly of the diferric tyrosyl radical cofactor of ribonucleotide reductase (RNR), probably by providing electrons for reduction during radical cofactor maturation in the catalytic small subunit RNR2. In Arthroderma otae (strain ATCC MYA-4605 / CBS 113480) (Microsporum canis), this protein is Fe-S cluster assembly protein DRE2.